A 618-amino-acid chain; its full sequence is Kelch-like protein 40b (618 aa).

The BTB domain occupies 33–100 (VDCVLKIKDK…LYTSNINVTE (68 aa)). The BACK domain occupies 135–237 (CLAIFRLGLM…PRDYFVKNVE (103 aa)). Positions 264–284 (PELKKTKNKKSPSEEGQKKGD) are enriched in basic and acidic residues. The interval 264–297 (PELKKTKNKKSPSEEGQKKGDEEEVEEEEEQEER) is disordered. A compositionally biased stretch (acidic residues) spans 285–295 (EEEVEEEEEQE). Kelch repeat units lie at residues 356–408 (QIFV…EAEN), 409–458 (FIFV…SHNE), 459–506 (MIYV…IHKN), 508–553 (IYVV…SVSG), and 555–608 (LYAV…VLGV).

This sequence belongs to the KLHL40 family. In terms of assembly, component of the BCR(KLHL40) E3 ubiquitin ligase complex. As to expression, expressed in skeletal muscle. Detected in the eye at much lower levels.

The protein localises to the cytoplasm. The protein resides in the myofibril. Its subcellular location is the sarcomere. It localises to the a band. It is found in the i band. Its function is as follows. Substrate-specific adapter of a BCR (BTB-CUL3-RBX1) E3 ubiquitin ligase complex. Required for skeletal muscle development. The protein is Kelch-like protein 40b (klhl40b) of Danio rerio (Zebrafish).